Consider the following 938-residue polypeptide: Isoleucine--tRNA ligase (938 aa).

Residues 58 to 68 (PYANGSIHIGH) carry the 'HIGH' region motif. An L-isoleucyl-5'-AMP-binding site is contributed by Glu561. The 'KMSKS' region motif lies at 602–606 (KMSKS). Lys605 contacts ATP. Positions 901, 904, 921, and 924 each coordinate Zn(2+).

Belongs to the class-I aminoacyl-tRNA synthetase family. IleS type 1 subfamily. In terms of assembly, monomer. Zn(2+) is required as a cofactor.

It is found in the cytoplasm. The enzyme catalyses tRNA(Ile) + L-isoleucine + ATP = L-isoleucyl-tRNA(Ile) + AMP + diphosphate. Catalyzes the attachment of isoleucine to tRNA(Ile). As IleRS can inadvertently accommodate and process structurally similar amino acids such as valine, to avoid such errors it has two additional distinct tRNA(Ile)-dependent editing activities. One activity is designated as 'pretransfer' editing and involves the hydrolysis of activated Val-AMP. The other activity is designated 'posttransfer' editing and involves deacylation of mischarged Val-tRNA(Ile). This Citrobacter koseri (strain ATCC BAA-895 / CDC 4225-83 / SGSC4696) protein is Isoleucine--tRNA ligase.